Here is a 365-residue protein sequence, read N- to C-terminus: Caffeic acid 3-O-methyltransferase 1 (365 aa).

130 to 136 (MNQDKVL) lines the substrate pocket. A substrate binding region spans residues 162 to 180 (AFEYHGTDPRFNKVFNKGM). Residues G208, D231, D251, M252, and K265 each coordinate S-adenosyl-L-methionine. H269 serves as the catalytic Proton acceptor.

The protein belongs to the class I-like SAM-binding methyltransferase superfamily. Cation-independent O-methyltransferase family. COMT subfamily. In terms of assembly, homodimer.

It catalyses the reaction (E)-caffeate + S-adenosyl-L-methionine = (E)-ferulate + S-adenosyl-L-homocysteine + H(+). It participates in aromatic compound metabolism; phenylpropanoid biosynthesis. Catalyzes the conversion of caffeic acid to ferulic acid and of 5-hydroxyferulic acid to sinapic acid. The resulting products may subsequently be converted to the corresponding alcohols that are incorporated into lignins. This chain is Caffeic acid 3-O-methyltransferase 1 (HOMT1), found in Populus kitakamiensis (Aspen).